We begin with the raw amino-acid sequence, 230 residues long: MTTLTARPEAITFDPQQSALIVVDMQNAYATPGGYLDLAGFDVSTTRPVIANIQTAVTAARAAGMLIIWFQNGWDEQYVEAGGPGSPNFHKSNALKTMRNQPQLQGKLLAKGSWDYQLVDELVPQPGDIVLPKPRYSGFFNTPLDSILRSRGIRHLVFTGIATNVCVESTLRDGFFLEYFGVVLEDATHQAGPEFAQKAALFNIETFFGWVSDVETFCDALSPTSFARIA.

Aspartate 24 acts as the Proton acceptor in catalysis. Lysine 133 is a catalytic residue. Cysteine 166 serves as the catalytic Nucleophile.

Belongs to the isochorismatase family. RutB subfamily.

The enzyme catalyses (Z)-3-ureidoacrylate + H2O + H(+) = (Z)-3-aminoacrylate + NH4(+) + CO2. It catalyses the reaction (Z)-3-ureidoacrylate + H2O = (Z)-3-aminoacrylate + carbamate + H(+). It carries out the reaction (Z)-2-methylureidoacrylate + H2O + H(+) = (Z)-2-methylaminoacrylate + NH4(+) + CO2. Its function is as follows. Hydrolyzes ureidoacrylate to form aminoacrylate and carbamate. The carbamate hydrolyzes spontaneously, thereby releasing one of the nitrogen atoms of the pyrimidine ring as ammonia and one of its carbon atoms as CO2. The polypeptide is Ureidoacrylate amidohydrolase RutB (Escherichia coli O103:H2 (strain 12009 / EHEC)).